Reading from the N-terminus, the 160-residue chain is uncharacterized protein (160 aa).

The signal sequence occupies residues 1 to 29 (MTGKTHIMGGIASCTAAAYYYGFDPVLMA). 2 consecutive transmembrane segments (helical) span residues 67-87 (TFTH…TYIP) and 137-157 (QLVL…LFHG).

To E.coli YdjM.

It localises to the cell membrane. This is an uncharacterized protein from Bacillus subtilis (strain 168).